A 116-amino-acid chain; its full sequence is uncharacterized protein (116 aa).

A helical membrane pass occupies residues 58 to 78 (IIVDFKFIFQIFLILSFGFFA).

Its subcellular location is the membrane. This is an uncharacterized protein from Rickettsia prowazekii (strain Madrid E).